The primary structure comprises 317 residues: Ataxin-3 homolog (317 aa).

The region spanning 7-178 (INSIFFEHQE…RSDADDLISL (172 aa)) is the Josephin domain. The active-site Nucleophile is the Cys-20. His-117 acts as the Proton acceptor in catalysis. The active site involves Asn-132. UIM domains follow at residues 219 to 239 (SQEEKDLAIAFAMSMETKDGS) and 247 to 264 (EIDEENLRKAIELSQAPG). The segment at 254 to 317 (RKAIELSQAP…KKKEERNDEK (64 aa)) is disordered. The span at 276–293 (RSRSSTPPGASEPFSNAE) shows a compositional bias: polar residues. A compositionally biased stretch (basic and acidic residues) spans 294–317 (QQRRDRQKFLERFEKKKEERNDEK). An interaction with cdc-48.1 and cdc-48.2 region spans residues 296 to 299 (RRDR).

Forms a complex composed of deubiquitinating enzyme atx-3, adapter ubxn-5 and cdc-48.1. Forms a complex composed of deubiquitinating enzyme atx-3, E4 ubiquitin-protein ligase ufd-2 and cdc-48.1. Interacts (via RRDR motif) with cdc-48.1 (via N-terminus) and cdc-48.2 (via N-terminus); the interaction with cdc-48.1 is not required for atx-3 enzymatic activity. Interacts (via C-terminus) with ubxn-5. May interact with ned-8. As to expression, expressed in germline (at protein level). Expressed in spermatheca, pharynx, dorsal and ventral cords, some head neurons, hypodermis, body wall muscles and coelomocytes.

It is found in the cytoplasm. The protein resides in the nucleus. It localises to the nucleolus. It carries out the reaction Thiol-dependent hydrolysis of ester, thioester, amide, peptide and isopeptide bonds formed by the C-terminal Gly of ubiquitin (a 76-residue protein attached to proteins as an intracellular targeting signal).. Its function is as follows. Acts as a chain editing deubiquitinating enzyme that binds and cleaves 'Lys-48'-linked polyubiquitin chains, with a preference for chains containing four or more ubiquitin molecules thereby modulating protein degradation by the ubiquitin-proteasome pathway. Probably by regulating the IGF-1-insulin-like pathway, regulates lifespan. Regulates germline DNA double-strand-break repair and apoptosis in response to DNA damage by recruiting E4 ubiquitin-protein ligase ufd-2 to DNA repair foci. Interacts with key regulators of transcription and represses transcription. Acts as a histone-binding protein that regulates transcription. In Caenorhabditis elegans, this protein is Ataxin-3 homolog (atx-3).